The chain runs to 659 residues: A-type ATP synthase subunit I (659 aa).

The next 8 helical transmembrane spans lie at 376-396, 415-435, 460-480, 489-509, 513-533, 542-562, 566-586, and 590-610; these read FFFGFMLTDFVYGLLLGVISA, IMLWASAFTMVLGILFGSYCG, VMALAIGLGHLFTGYILGFIV, AAILEQLPWVFIIIGITLFAL, LGIPQIAFKAVFGVGLALFVV, MAVLLTISDFFGFIGNWLSYA, ALALATSGIALVINIIANMVW, and IGPIPLGILIGIVILIGGHIF.

Belongs to the V-ATPase 116 kDa subunit family. As to quaternary structure, has multiple subunits with at least A(3), B(3), C, D, E, F, H, I and proteolipid K(x).

It is found in the cell membrane. In terms of biological role, component of the A-type ATP synthase that produces ATP from ADP in the presence of a proton gradient across the membrane. This Pyrococcus abyssi (strain GE5 / Orsay) protein is A-type ATP synthase subunit I.